We begin with the raw amino-acid sequence, 133 residues long: Ribosome-binding factor A (133 aa).

This sequence belongs to the RbfA family. In terms of assembly, monomer. Binds 30S ribosomal subunits, but not 50S ribosomal subunits or 70S ribosomes.

It is found in the cytoplasm. Functionally, one of several proteins that assist in the late maturation steps of the functional core of the 30S ribosomal subunit. Associates with free 30S ribosomal subunits (but not with 30S subunits that are part of 70S ribosomes or polysomes). Required for efficient processing of 16S rRNA. May interact with the 5'-terminal helix region of 16S rRNA. This is Ribosome-binding factor A from Salmonella heidelberg (strain SL476).